The sequence spans 2158 residues: MNVLVLGDQVADHLQLLENTYHRKNNASVKGFLDRATDVLLSEIAKLPKRQRENIPEFRTILNLVQLYRERGLAIPHVESALVTVSQLAYYIGYFADYPTDLPNPENKRVLGLCTGQLAASVVASSHTLDELLPIALEAVKLAFRTGLEVACQGEAIEQGPLSSEKWSTVVQDITEDEAMSLIDNFHKERKIPVSAHAYISAVAPTSITVSGPPSTTKELFEIEELSKKRKTPIPVFAPYHASHLYDASVIDRIIGDSAEVLKRYRSRALFHSASTGKCHITTDTLELVRVALREILLEPVRWSSLIEECVSQVLESGDTECTVFPIGATMVTNSLVSTLKAAGQSSLSVRVSKPWGPDWEGTKGRTQNDKIAIVGMSGRFPSAASHEELWELLAKGLDVHREIPSDRFDAQAHCDPSGKGKNKSHTPYGCFIDEPGMFDPRFFNMSPREAAQTDPMGRLALTTAYEALEMSGYVPNRTPSSMLNRIGTFYGQTSDDWREINAAENVDTYFITGGVRAFAPGRINYYFKFSGPSFSIDTACSSSLAAIQLACTSLWAGDCDTACAGGLNVLTNPDIFSGLSKGQFLSKTGGCKTYDNDADGYCRGDGCGTVILKRYEDAIADKDNILGCILGAATNHSAEAVSITHPHAGAQEFLYKKVLANAGVDAHEITYVEMHGTGTQAGDGIEMTSVTNAFAPRNRQRRPDQPLYLGAIKANIGHGEAASGINSLVKCMMMLKKNAIPANVGIKGVMNKTFPKDLAQRNVHIETEMVPYPRKGAEKRKMFLNNFSAAGGNTAIILEDGPLREAPKGVDPRTSQVVTITGRSISSLKKNIDNLIKYLDQNPDTTLPSLAYTTTARRIQHNYRVAVVVSDISQVKDALKNQIKDSYSPVAMVSTKTAFTFTGQGSQYTGLGKKLYEEMGSFKSDIHQLDNLARLHSLPSIIPLLDGSTDVAKLSPVVVQLGMACIQVALSRMWASWGVTPSAVIGHSLGEYAALHVAGVISASDMVLLVGRRAQLLEKECTAHTHGMLAVKGGVESISDALGDKMIEIACMNGPEETVLCGKVDVIESTADALATKGFKATKLNVPFAFHSAQVEPILEKFQDVATSVKFKKPVVPVLSPLNGEVIREAGIIGPKYLADHARRTVDFWHALSAGKDEKAFDEKTAWLEIGAHPVCSGMVKSSLGGSPCTAGSLRRNEDPWKTLANSVSTLFLAGVGIDFPEYHRQFDDAHELLTLPTYAFDNKKYWLDYHNNWTLTKGEARTDAAPKTIEAPAEVKSKLSTTSCQRIVREELHANSGTVVVQSDLSDPKLRATISGHQVNGTPLCPSSLYADQAMTLADYLYKQLRPNLPTPGLNVCAMEVPKTLIPQYPPPAGGQHLQIEATADLEHNRVEVRFRTVPADGSKILAEHAFGTVKYEDVSQWKEEWARTQYMVQTQIDLLKQKLVSGSAHKVLRGMAYKLFKALVSYADNYRGMEEVILDGKQTEATATVKFQTTPEDGSFFCSPYWIDSLAHLSGFIVNASDHLDSENSVYISHGWGSIKISKQLSPEKRYQSYVRMQPAPGNISVGDVYILEGEEVIGLVTGLKFQNIARRVLNIMMPPAGGAAKAAGGKAAPAKKAASPTLAPAKAAKPAAKTSKPSKARAKPAADSTTSRVMKIIATETDVDMAELVDEAAFENLGVDSLMSLTISAKFREELDLEISSTLFTDHPTVGQMKKFFSQYDGAPIPDDGDDSDGTDEPSNFSTPSYGADNASTPPSSAPSVNGKSSPENHEVLESTEVSLARKIVAEEMGVDVAEITDKADLSEMGMDSLMSLTILGALRESTGIDLPSTFLVTNVTIEDIENELGMRPKPKPKAEAAPPKSSAKASPSANKQPQLSAVNEKLKNIVDVSQYPPANSVLLQGNPKIATKKMFLVPDGSGSATSYISVPPISPDLAVFGLNCPFMKSPEKWTCGVEGVSALYLAEIKRRQPKGPYIIGGWSAGGVMAYEVTQQLVNSGEVVERLVLIDAPCPVALDPLPARLHIFFDQIGLLGTGKPGGTPKWLLPHFASAIQNLKDYEPIPMDPQRAPEVFAIWCTDGVCPNPDDPRPPPGEGEDPAPMKWLLNNRTDFEDNGWAQLLPKKNFTYAVMGGNHFTMMKGDHGAKLGEHLKEGLKL.

The N-terminal acylcarrier protein transacylase domain (SAT) stretch occupies residues 4-241 (LVLGDQVADH…TPIPVFAPYH (238 aa)). The Ketosynthase family 3 (KS3) domain maps to 369–801 (NDKIAIVGMS…GGNTAIILED (433 aa)). Catalysis depends on for beta-ketoacyl synthase activity residues Cys541, His676, and His719. Residues 900–1215 (FTFTGQGSQY…ANSVSTLFLA (316 aa)) are malonyl-CoA:ACP transacylase (MAT) domain. Ser989 functions as the For acyl/malonyl transferase activity in the catalytic mechanism. The tract at residues 1285-1603 (SCQRIVREEL…RRVLNIMMPP (319 aa)) is product template (PT) domain. The tract at residues 1287 to 1423 (QRIVREELHA…GTVKYEDVSQ (137 aa)) is N-terminal hotdog fold. The PKS/mFAS DH domain occupies 1287–1598 (QRIVREELHA…FQNIARRVLN (312 aa)). His1319 serves as the catalytic Proton acceptor; for dehydratase activity. A C-terminal hotdog fold region spans residues 1451–1598 (AHKVLRGMAY…FQNIARRVLN (148 aa)). Asp1511 serves as the catalytic Proton donor; for dehydratase activity. Residues 1619-1639 (KKAASPTLAPAKAAKPAAKTS) show a composition bias toward low complexity. A disordered region spans residues 1619–1654 (KKAASPTLAPAKAAKPAAKTSKPSKARAKPAADSTT). The 75-residue stretch at 1651–1725 (DSTTSRVMKI…QMKKFFSQYD (75 aa)) folds into the Carrier 1 domain. Ser1685 carries the post-translational modification O-(pantetheine 4'-phosphoryl)serine. The disordered stretch occupies residues 1723-1779 (QYDGAPIPDDGDDSDGTDEPSNFSTPSYGADNASTPPSSAPSVNGKSSPENHEVLES). The segment covering 1731 to 1740 (DDGDDSDGTD) has biased composition (acidic residues). The span at 1743–1770 (SNFSTPSYGADNASTPPSSAPSVNGKSS) shows a compositional bias: polar residues. Residues 1779 to 1853 (STEVSLARKI…DIENELGMRP (75 aa)) enclose the Carrier 2 domain. Position 1813 is an O-(pantetheine 4'-phosphoryl)serine (Ser1813). A disordered region spans residues 1847–1879 (NELGMRPKPKPKAEAAPPKSSAKASPSANKQPQ). Over residues 1860-1876 (EAAPPKSSAKASPSANK) the composition is skewed to low complexity. A thioesterase (TE) domain region spans residues 1894–2144 (SQYPPANSVL…NHFTMMKGDH (251 aa)).

Pantetheine 4'-phosphate is required as a cofactor.

Its function is as follows. Non-reducing polyketide synthase; part of a gene cluster that mediates the biosynthesis of a yet unidentified natural product. The protein is Non-reducing polyketide synthase Preu8 of Preussia isomera (Coprophilous fungus).